Reading from the N-terminus, the 120-residue chain is Large ribosomal subunit protein bL17 (120 aa).

It belongs to the bacterial ribosomal protein bL17 family. In terms of assembly, part of the 50S ribosomal subunit. Contacts protein L32.

The polypeptide is Large ribosomal subunit protein bL17 (Bacillus licheniformis (strain ATCC 14580 / DSM 13 / JCM 2505 / CCUG 7422 / NBRC 12200 / NCIMB 9375 / NCTC 10341 / NRRL NRS-1264 / Gibson 46)).